Here is a 273-residue protein sequence, read N- to C-terminus: DnaJ homolog subfamily C member 27 (273 aa).

The tract at residues 1–18 (MEANMPKRKEPGRSLRIK) is required for interaction with MAPK1. Residues 23–30 (GNAEVGKS), 71–75 (DMAGH), and 134–137 (NKID) contribute to the GTP site. A J domain is found at 217 to 273 (DSWDMLGVKPGASRDEVNKAYRKLAVLLHPDKCVAPGSEDAFKAVVNARTALLKNIK).

Belongs to the small GTPase superfamily. Rab family. In terms of assembly, interacts directly with MAPK1 (wild-type and kinase-deficient forms). Interacts directly (in GTP-bound form) with MAP2K1 (wild-type and kinase-deficient forms). As to expression, overexpressed in gastrointestinal cancers; expression correlates with later tumor-node-metastasis stages of colorectal cancers.

The protein localises to the nucleus. Functionally, GTPase which can activate the MEK/ERK pathway and induce cell transformation when overexpressed. May act as a nuclear scaffold for MAPK1, probably by association with MAPK1 nuclear export signal leading to enhanced ERK1/ERK2 signaling. The polypeptide is DnaJ homolog subfamily C member 27 (DNAJC27) (Homo sapiens (Human)).